We begin with the raw amino-acid sequence, 355 residues long: Peptide chain release factor 1 (355 aa).

Gln233 is subject to N5-methylglutamine.

Belongs to the prokaryotic/mitochondrial release factor family. Methylated by PrmC. Methylation increases the termination efficiency of RF1.

The protein resides in the cytoplasm. Peptide chain release factor 1 directs the termination of translation in response to the peptide chain termination codons UAG and UAA. This chain is Peptide chain release factor 1, found in Bacillus cereus (strain ATCC 14579 / DSM 31 / CCUG 7414 / JCM 2152 / NBRC 15305 / NCIMB 9373 / NCTC 2599 / NRRL B-3711).